A 918-amino-acid chain; its full sequence is Leucine--tRNA ligase (918 aa).

The 'HIGH' region motif lies at 40–51 (PYPSGVGLHVGH). Positions 692–696 (KMSKS) match the 'KMSKS' region motif. Lys695 provides a ligand contact to ATP.

This sequence belongs to the class-I aminoacyl-tRNA synthetase family.

The protein resides in the cytoplasm. It carries out the reaction tRNA(Leu) + L-leucine + ATP = L-leucyl-tRNA(Leu) + AMP + diphosphate. In Azobacteroides pseudotrichonymphae genomovar. CFP2, this protein is Leucine--tRNA ligase.